The sequence spans 582 residues: MEVKRTKGVLKRIAGPVVTAVNLDAHMYDVVKVGDEQLMGEVIKIKGEDIIIQVYEDTSGIKPGEPVENTGLSLSVELGPGLLTSIYDGIQRPLEVLVEKMGNFIERGVTAPGLSHDKKWEFKPIKKAGDMVTPGTIIGEVQETNIVHKIMVPPYCDAGKIKDIKSGSFTIDEIICTLDNGAEIAMMHKWPVRMPRPVTEKLNPDIPLITGQRILDGLFPVAKGGTAAIPGPFGSGKTVTQQALAKWSDAEIVVYIGCGERGNEMTEVLTEFPELEDPKTGRPLMERTVLIANTSNMPVAAREASVYTGITIAEYFRDMGYDVSLMADSTSRWAEAMREISSRLEEMPGEEGYPAYLAARLSEFYERAGRVNTLNKDFGSVTVIGAVSPPGGDFSEPVTQNTLRIVKCFWALDAKLSQRRHFPAINWLNSYSLYLDTLSQYYDENVSPEWNPLRTWAMEVLQKEAELQEIVQLVGSDALPDEEQVTIEVARMLREIFLQQNAFDPVDTYCDMTKQFDILKAIRFYSDQAYAALKAGVITSQITGLKAKNDLPQIKYVKEYKPEIERIVKTMESEFTKLREAA.

231–238 lines the ATP pocket; that stretch reads GPFGSGKT.

It belongs to the ATPase alpha/beta chains family. Has multiple subunits with at least A(3), B(3), C, D, E, F, H, I and proteolipid K(x).

The protein localises to the cell membrane. The catalysed reaction is ATP + H2O + 4 H(+)(in) = ADP + phosphate + 5 H(+)(out). In terms of biological role, component of the A-type ATP synthase that produces ATP from ADP in the presence of a proton gradient across the membrane. The A chain is the catalytic subunit. The sequence is that of A-type ATP synthase subunit A 1 from Methanospirillum hungatei JF-1 (strain ATCC 27890 / DSM 864 / NBRC 100397 / JF-1).